A 1091-amino-acid chain; its full sequence is MAGPGSPRRASRGASALLAAALLYAALGDVVRSEQQIPLSVVKLWASAFGGEIKSIAAKYSGSQLLQKKYKEYEKDVAIEEIDGLQLVKKLAKNMEEMFHKKSEAVRRLVEAAEEAHLKHEFDADLQYEYFNAVLINERDKDGNFLELGKEFILAPNDHFNNLPVNISLSDVQVPTNMYNKDPAIVNGVYWSESLNKVFVDNFDRDPSLIWQYFGSAKGFFRQYPGIKWEPDENGVIAFDCRNRKWYIQAATSPKDVVILVDVSGSMKGLRLTIAKQTVSSILDTLGDDDFFNIIAYNEELHYVEPCLNGTLVQADRTNKEHFREHLDKLFAKGIGMLDIALNEAFNILSDFNHTGQGSICSQAIMLITDGAVDTYDTIFAKYNWPDRKVRIFTYLIGREAAFADNLKWMACANKGFFTQISTLADVQENVMEYLHVLSRPKVIDQEHDVVWTEAYIDSTLPQAQKLTDDQGPVLMTTVAMPVFSKQNETRSKGILLGVVGTDVPVKELLKTIPKYKLGIHGYAFAITNNGYILTHPELRLLYEEGKKRRKPNYSSVDLSEVEWEDRDDVLRNAMVNRKTGKFSMEVKKTVDKGKRVLVMTNDYYYTDIKGTPFSLGVALSRGHGKYFFRGNVTIEEGLHDLEHPDVSLADEWSYCNTDLHPEHRHLSQLEAIKLYLKGKEPLLQCDKELIQEVLFDAVVSAPIEAYWTSLALNKSENSDKGVEVAFLGTRTGLSRINLFVGAEQLTNQDFLKAGDKENIFNADHFPLWYRRAAEQIPGSFVYSIPFSTGPVNKSNVVTASTSIQLLDERKSPVVAAVGIQMKLEFFQRKFWTASRQCASLDGKCSISCDDETVNCYLIDNNGFILVSEDYTQTGDFFGEIEGAVMNKLLTMGSFKRITLYDYQAMCRANKESSDGAHGLLDPYNAFLSAVKWIMTELVLFLVEFNLCSWWHSDMTAKAQKLKQTLEPCDTEYPAFVSERTIKETTGNIACEDCSKSFVIQQIPSSNLFMVVVDSSCLCESVAPITMAPIEIRYNESLKCERLKAQKIRRRPESCHGFHPEENARECGGAPSLQAQTVLLLLPLLLMLFSR.

Positions 1-28 (MAGPGSPRRASRGASALLAAALLYAALG) are cleaved as a signal peptide. Residues 29-1068 (DVVRSEQQIP…HPEENARECG (1040 aa)) are Extracellular-facing. A glycan (N-linked (GlcNAc...) asparagine) is linked at Asn166. Positions 256 to 438 (DVVILVDVSG…ENVMEYLHVL (183 aa)) constitute a VWFA domain. The a divalent metal cation site is built by Asp262, Ser264, and Ser266. The MIDAS-like motif motif lies at 262–266 (DVSGS). A glycan (N-linked (GlcNAc...) asparagine) is linked at Asn309. Cys412 and Cys1055 are oxidised to a cystine. Positions 452–549 (WTEAYIDSTL…RLLYEEGKKR (98 aa)) constitute a Cache domain. 3 N-linked (GlcNAc...) asparagine glycosylation sites follow: Asn553, Asn632, and Asn793. Tyr924 bears the Phosphotyrosine mark. The chain crosses the membrane as a helical span at residues 1069–1089 (GAPSLQAQTVLLLLPLLLMLF). Topologically, residues 1090-1091 (SR) are cytoplasmic.

This sequence belongs to the calcium channel subunit alpha-2/delta family. In terms of assembly, dimer formed of alpha-2-2 and delta-2 chains; disulfide-linked. Voltage-dependent calcium channels are multisubunit complexes, consisting of alpha-1 (CACNA1), alpha-2 (CACNA2D), beta (CACNB) and delta (CACNA2D) subunits in a 1:1:1:1 ratio. N-glycosylated. Post-translationally, may be proteolytically processed into subunits alpha-2-3 and delta-3 that are disulfide-linked. It is however unclear whether such cleavage really takes place in vivo and has a functional role. In terms of tissue distribution, only detected in brain. Not present in lung, testis, aorta, spleen, jejunum, ventricular muscle and kidney (at protein level). According to PubMed:11687876, it is brain-specific, while according to PubMed:11245980, it is widely expressed.

The protein localises to the membrane. Functionally, the alpha-2/delta subunit of voltage-dependent calcium channels regulates calcium current density and activation/inactivation kinetics of the calcium channel. Acts as a regulatory subunit for P/Q-type calcium channel (CACNA1A), N-type (CACNA1B), L-type (CACNA1C OR CACNA1D) but not T-type (CACNA1G). The polypeptide is Voltage-dependent calcium channel subunit alpha-2/delta-3 (CACNA2D3) (Homo sapiens (Human)).